The following is a 352-amino-acid chain: Protein-glutamate methylesterase/protein-glutamine glutaminase (352 aa).

The Response regulatory domain maps to 5-123; the sequence is RILIVDDSVI…SKEKAIEYIR (119 aa). Position 56 is a 4-aspartylphosphate (aspartate 56). A CheB-type methylesterase domain is found at 166-352; that stretch reads EIVAIGVSTG…LAEEIIRRIG (187 aa). Catalysis depends on residues serine 173, histidine 200, and aspartate 296.

This sequence belongs to the CheB family. Phosphorylated by CheA. Phosphorylation of the N-terminal regulatory domain activates the methylesterase activity.

Its subcellular location is the cytoplasm. It carries out the reaction [protein]-L-glutamate 5-O-methyl ester + H2O = L-glutamyl-[protein] + methanol + H(+). The catalysed reaction is L-glutaminyl-[protein] + H2O = L-glutamyl-[protein] + NH4(+). Functionally, involved in chemotaxis. Part of a chemotaxis signal transduction system that modulates chemotaxis in response to various stimuli. Catalyzes the demethylation of specific methylglutamate residues introduced into the chemoreceptors (methyl-accepting chemotaxis proteins or MCP) by CheR. Also mediates the irreversible deamidation of specific glutamine residues to glutamic acid. The sequence is that of Protein-glutamate methylesterase/protein-glutamine glutaminase from Trichodesmium erythraeum (strain IMS101).